The primary structure comprises 496 residues: Solute carrier family 2, facilitated glucose transporter member 3 (496 aa).

The Cytoplasmic segment spans residues 1-10; the sequence is MGTQKVTPAL. A helical membrane pass occupies residues 11 to 32; that stretch reads IFAITVATIGSFQFGYNTGVIN. Residues 33–64 are Extracellular-facing; the sequence is APEKIIKEFINKTLTDKGNAPPSEVLLTSLWS. N-linked (GlcNAc...) asparagine glycosylation occurs at N43. The chain crosses the membrane as a helical span at residues 65 to 85; it reads LSVAIFSVGGMIGSFSVGLFV. Topologically, residues 86 to 90 are cytoplasmic; it reads NRFGR. Residues 91–111 traverse the membrane as a helical segment; that stretch reads RNSMLIVNLLAVTGGCFMGLC. Residues 112–118 are Extracellular-facing; the sequence is KVAKSVE. The chain crosses the membrane as a helical span at residues 119–142; the sequence is MLILGRLIIGLFCGLCTGFVPMYI. Over 143–153 the chain is Cytoplasmic; it reads GEISPTALRGA. A helical transmembrane segment spans residues 154 to 174; that stretch reads FGTLNQLGIVVGILVAQIFGL. Residue Q159 participates in D-glucose binding. The Extracellular portion of the chain corresponds to 175–183; that stretch reads EFILGSEEL. A helical membrane pass occupies residues 184 to 204; the sequence is WPLLLGFTILPTILQSAALPF. At 205-269 the chain is on the cytoplasmic side; sequence CPESPRFLLI…LFRVSSYRQP (65 aa). The residue at position 232 (T232) is a Phosphothreonine. Residues 270-290 traverse the membrane as a helical segment; that stretch reads IIISIVLQLSQQLSGINAVFY. Positions 277–279 are important for selectivity against fructose; it reads QLS. D-glucose contacts are provided by residues 280-281 and N286; that span reads QQ. Residues 291 to 304 are Extracellular-facing; sequence YSTGIFKDAGVQEP. The chain crosses the membrane as a helical span at residues 305-325; the sequence is IYATIGAGVVNTIFTVVSLFL. N315 contributes to the D-glucose binding site. The Cytoplasmic portion of the chain corresponds to 326-331; the sequence is VERAGR. The helical transmembrane segment at 332–352 threads the bilayer; it reads RTLHMIGLGGMAFCSTLMTVS. Residues 353–363 lie on the Extracellular side of the membrane; that stretch reads LLLKDNYNGMS. Residues 364–389 form a helical membrane-spanning segment; it reads FVCIGAILVFVAFFEIGPGPIPWFIV. 2 residues coordinate D-glucose: E378 and W386. The Cytoplasmic portion of the chain corresponds to 390–399; sequence AELFSQGPRP. A helical transmembrane segment spans residues 400–420; it reads AAMAVAGCSNWTSNFLVGLLF. Topologically, residues 421 to 429 are extracellular; that stretch reads PSAAHYLGA. The helical transmembrane segment at 430–450 threads the bilayer; that stretch reads YVFIIFTGFLITFLAFTFFKV. Residues 451–496 lie on the Cytoplasmic side of the membrane; sequence PETRGRTFEDITRAFEGQAHGADRSGKDGVMEVNSIEPAKETTTNV. A phosphoserine mark is found at S475 and S485. T492 carries the phosphothreonine modification.

The protein belongs to the major facilitator superfamily. Sugar transporter (TC 2.A.1.1) family. Glucose transporter subfamily. Interacts with SMIM43; the interaction may promote SLC2A3-mediated glucose transport to meet the energy needs of mesendoderm differentiation.

The protein localises to the cell membrane. Its subcellular location is the perikaryon. The protein resides in the cell projection. It carries out the reaction D-glucose(out) = D-glucose(in). It catalyses the reaction D-galactose(in) = D-galactose(out). Its activity is regulated as follows. Deoxyglucose transport is inhibited by D-glucose, D-galactose and maltose. Galactose transport is inhibited by D-glucose and maltose. Its function is as follows. Facilitative glucose transporter. Can also mediate the uptake of various other monosaccharides across the cell membrane. Mediates the uptake of glucose, 2-deoxyglucose, galactose, mannose, xylose and fucose, and probably also dehydroascorbate. Does not mediate fructose transport. Required for mesendoderm differentiation. This chain is Solute carrier family 2, facilitated glucose transporter member 3, found in Pongo abelii (Sumatran orangutan).